The following is an 87-amino-acid chain: MKLSIFFVLFFIAIAYCQPEFLDDEEDEVEETLPVAEEGREKSCITWRNSCMHYDKGCCFPWTCVCWSQTVSRNSSRKEKKCQCRLR.

Positions 1 to 17 (MKLSIFFVLFFIAIAYC) are cleaved as a signal peptide. Positions 18–40 (QPEFLDDEEDEVEETLPVAEEGR) are excised as a propeptide. Cystine bridges form between C44/C59, C51/C64, C58/C84, and C66/C82.

It belongs to the neurotoxin omega-lctx family. As to expression, expressed by the venom gland.

The protein localises to the secreted. In terms of biological role, modulates Cav2.1/CACNA1A voltage-gated calcium channels (P/Q-type currents) in rat cerebellar Purkinje cells and hippocampal CA1-CA3 neurons. At saturating concentrations (&gt;10 nM) decelerates activation kinetics and slightly increases peak amplitude without affecting deactivation kinetics. In vivo, does not cause death when intravenously injected into mice. In rat models, through its activity on Cav2.1/CACNA1A, has an ameliorative effect on memory defects provoked by hyperstimulation of N-methyl-D-aspartate receptors (NMDARs) in the hippocampus. This chain is Omega-lycotoxin-Am1g, found in Alopecosa marikovskyi (Wolf spider).